The primary structure comprises 28 residues: leu operon leader peptide (28 aa).

Its function is as follows. Involved in control of the biosynthesis of leucine. The sequence is that of leu operon leader peptide (leuL) from Salmonella typhi.